A 561-amino-acid polypeptide reads, in one-letter code: Dihydroxy-acid dehydratase (561 aa).

Cys-50 is a binding site for [2Fe-2S] cluster. Residue Asp-82 coordinates Mg(2+). Cys-123 serves as a coordination point for [2Fe-2S] cluster. Mg(2+) is bound by residues Asp-124 and Lys-125. Lys-125 carries the post-translational modification N6-carboxylysine. [2Fe-2S] cluster is bound at residue Cys-195. Glu-447 serves as a coordination point for Mg(2+). Ser-473 (proton acceptor) is an active-site residue.

This sequence belongs to the IlvD/Edd family. Homodimer. Requires [2Fe-2S] cluster as cofactor. It depends on Mg(2+) as a cofactor.

It catalyses the reaction (2R)-2,3-dihydroxy-3-methylbutanoate = 3-methyl-2-oxobutanoate + H2O. The catalysed reaction is (2R,3R)-2,3-dihydroxy-3-methylpentanoate = (S)-3-methyl-2-oxopentanoate + H2O. Its pathway is amino-acid biosynthesis; L-isoleucine biosynthesis; L-isoleucine from 2-oxobutanoate: step 3/4. The protein operates within amino-acid biosynthesis; L-valine biosynthesis; L-valine from pyruvate: step 3/4. Its function is as follows. Functions in the biosynthesis of branched-chain amino acids. Catalyzes the dehydration of (2R,3R)-2,3-dihydroxy-3-methylpentanoate (2,3-dihydroxy-3-methylvalerate) into 2-oxo-3-methylpentanoate (2-oxo-3-methylvalerate) and of (2R)-2,3-dihydroxy-3-methylbutanoate (2,3-dihydroxyisovalerate) into 2-oxo-3-methylbutanoate (2-oxoisovalerate), the penultimate precursor to L-isoleucine and L-valine, respectively. The protein is Dihydroxy-acid dehydratase of Rippkaea orientalis (strain PCC 8801 / RF-1) (Cyanothece sp. (strain PCC 8801)).